We begin with the raw amino-acid sequence, 187 residues long: MINVNEFKPGITFEDEGNIYVVLTAQHSKQGRGQANVKAKVKNLRTGSTTLKSYTGGDKVQKAHIEKKPMDYLYNDGSNIILMDQESFEQIEIDVKKVEWELNFLTEGMKILVRQYQNEILDIEIPINIELKVINAPDAVKGNTTTNPQKKVIVETGYELEVPMFIKEGETIIVSSETGKYGGKSSK.

This sequence belongs to the elongation factor P family.

Its subcellular location is the cytoplasm. The protein operates within protein biosynthesis; polypeptide chain elongation. Its function is as follows. Involved in peptide bond synthesis. Stimulates efficient translation and peptide-bond synthesis on native or reconstituted 70S ribosomes in vitro. Probably functions indirectly by altering the affinity of the ribosome for aminoacyl-tRNA, thus increasing their reactivity as acceptors for peptidyl transferase. The sequence is that of Elongation factor P from Mycoplasmopsis pulmonis (strain UAB CTIP) (Mycoplasma pulmonis).